A 382-amino-acid chain; its full sequence is MRKRINLLREFSVPLIAGVVVALLWANLDPAGYHSFIEQPFFGGMSFHFVVNELFMVLFFGIAAVEITQSCLPGGDLNPLRKAVNPLLATLGGVVGPVLVYLGLNAIIGGPELTRGWGIPTATDIALAWLVARLVFGAGHPAVSFLLLLAVADDAIGLAIIAVFYPDPNHPTEPIWLFLTVAGMVVAYILRSLKSRSYWPYVVVGGGLAWTGLFKAHLHPALALVFIIPFLPHPSRETAHLFEADPRDTSTLARFEHDWKIVVDFGLFMFGLANAGVGFSSVGAATWLVLASLVIGKTLGIFAMGYVGRALGFPLPQQVGAKELAMTGLVAGIGLTVALFVAGVAFVEPDIQGSAKMGALLSGGVSIVAIMLGRALNVRRIP.

10 consecutive transmembrane segments (helical) span residues 11–31 (FSVP…LDPA), 47–67 (FHFV…AVEI), 88–108 (LATL…NAII), 116–136 (GWGI…RLVF), 145–165 (FLLL…AVFY), 170–190 (HPTE…AYIL), 261–283 (IVVD…SSVG), 299–319 (LGIF…PQQV), 327–347 (TGLV…VAFV), and 353–373 (GSAK…IMLG).

This sequence belongs to the NhaA Na(+)/H(+) (TC 2.A.33) antiporter family.

It is found in the cell inner membrane. It carries out the reaction Na(+)(in) + 2 H(+)(out) = Na(+)(out) + 2 H(+)(in). Functionally, na(+)/H(+) antiporter that extrudes sodium in exchange for external protons. This Geobacter sulfurreducens (strain ATCC 51573 / DSM 12127 / PCA) protein is Na(+)/H(+) antiporter NhaA.